We begin with the raw amino-acid sequence, 1239 residues long: DNA polymerase subunit gamma-1 (1239 aa).

The disordered stretch occupies residues 1–68 (MSRLLWRKVA…PQVLSSEGGQ (68 aa)). Low complexity-rich tracts occupy residues 9–36 (VAGA…SDPS) and 44–60 (QQQQ…QQPQ). A does not contribute to polymerase and exonuclease enzymatic activities region spans residues 43 to 55 (QQQQQQQQQQQQQ). Positions 196-200 (VFDVE) match the Exo I motif. Residue aspartate 198 is the Exonuclease activity of the active site. The short motif at 267-275 (VGHNVSFDR) is the Exo II element. Serine 306 contacts DNA. A disordered region spans residues 318 to 340 (GKHKVQPPTKQGQKSQRKARRGP). Residues 395–403 (YCAQDVWAT) carry the Exo III motif. The tract at residues 506-531 (EPATASKLPIEGAGAPGDPMDQEDLG) is disordered. Residues 510-571 (ASKLPIEGAG…RPQHLPGHPG (62 aa)) form an accessory-interacting determinant region. Arginine 579 provides a ligand contact to RNA. Serine 593 contributes to the DNA binding site. RNA is bound by residues histidine 754, glycine 763, and lysine 768. The DNA site is built by lysine 806 and threonine 849. A trigger loop region spans residues 858–864 (TWLTASN). RNA contacts are provided by serine 863 and arginine 869. Positions 887 to 896 (VGADVDSQEL) match the Pol A motif. A 2'-deoxyribonucleoside 5'-triphosphate is bound by residues aspartate 890, valine 891, serine 893, glutamate 895, arginine 943, lysine 947, and tyrosine 951. Mg(2+) is bound by residues aspartate 890 and valine 891. Residues 943–958 (REHAKIFNYGRIYGAG) carry the Pol B motif. DNA-binding residues include threonine 1094 and serine 1095. The Pol C motif lies at 1134 to 1141 (HDEVRYLV). Aspartate 1135 provides a ligand contact to a 2'-deoxyribonucleoside 5'-triphosphate. Mg(2+) is bound at residue aspartate 1135.

The protein belongs to the DNA polymerase type-A family. As to quaternary structure, heterotrimer composed of a catalytic subunit and a homodimer of accessory subunits (POLG:POLG2). Interacts with TTC3. Interacts with LIG3. The cofactor is Mg(2+).

The protein resides in the mitochondrion. It localises to the mitochondrion matrix. The protein localises to the mitochondrion nucleoid. The enzyme catalyses DNA(n) + a 2'-deoxyribonucleoside 5'-triphosphate = DNA(n+1) + diphosphate. It carries out the reaction a 3'-end 2'-deoxyribonucleotidyl-deoxyribonucleotide-DNA + H2O = a 3'-end 2'-deoxyribonucleotide-DNA + a 2'-deoxyribonucleoside 5'-phosphate + H(+). The catalysed reaction is a 5'-end 2'-deoxyribose-2'-deoxyribonucleotide-DNA = (2E,4S)-4-hydroxypenten-2-al-5-phosphate + a 5'-end 5'-phospho-2'-deoxyribonucleoside-DNA + H(+). Its activity is regulated as follows. Inhibited by dideoxynucleotides such as antiviral agent zalcitabine. Its function is as follows. Catalytic subunit of DNA polymerase gamma solely responsible for replication of mitochondrial DNA (mtDNA). Replicates both heavy and light strands of the circular mtDNA genome using a single-stranded DNA template, RNA primers and the four deoxyribonucleoside triphosphates as substrates. Has 5' -&gt; 3' polymerase activity. Functionally interacts with TWNK and SSBP1 at the replication fork to form a highly processive replisome, where TWNK unwinds the double-stranded DNA template prior to replication and SSBP1 covers the parental heavy strand to enable continuous replication of the entire mitochondrial genome. A single nucleotide incorporation cycle includes binding of the incoming nucleotide at the insertion site, a phosphodiester bond formation reaction that extends the 3'-end of the primer DNA, and translocation of the primer terminus to the post-insertion site. After completing replication of a mtDNA strand, mediates 3' -&gt; 5' exonucleolytic degradation at the nick to enable proper ligation. Highly accurate due to high nucleotide selectivity and 3' -&gt; 5' exonucleolytic proofreading. Proficiently corrects base substitutions, single-base additions and deletions in non-repetitive sequences and short repeats, but displays lower proofreading activity when replicating longer homopolymeric stretches. Exerts exonuclease activity toward single-stranded DNA and double-stranded DNA containing 3'-terminal mispairs. When a misincorporation occurs, transitions from replication to a pro-nucleolytic editing mode and removes the missincorporated nucleoside in the exonuclease active site. Proceeds via an SN2 nucleolytic mechanism in which Asp-198 catalyzes phosphodiester bond hydrolysis and Glu-200 stabilizes the leaving group. As a result the primer strand becomes one nucleotide shorter and is positioned in the post-insertion site, ready to resume DNA synthesis. Exerts 5'-deoxyribose phosphate (dRP) lyase activity and mediates repair-associated mtDNA synthesis (gap filling) in base-excision repair pathway. Catalyzes the release of the 5'-terminal 2-deoxyribose-5-phosphate sugar moiety from incised apurinic/apyrimidinic (AP) sites to produce a substrate for DNA ligase. The dRP lyase reaction does not require divalent metal ions and likely proceeds via a Schiff base intermediate in a beta-elimination reaction mechanism. The protein is DNA polymerase subunit gamma-1 of Homo sapiens (Human).